A 98-amino-acid polypeptide reads, in one-letter code: Hainantoxin-XVII (98 aa).

The N-terminal stretch at 1-40 (MTTVGVSLFRRSPEKITMKIATFLGLSFLLIASYVLICEA) is a signal peptide. A propeptide spanning residues 41 to 64 (QHPGFQELLILEENMRDPENSKER) is cleaved from the precursor. Cystine bridges form between Cys-66–Cys-81, Cys-73–Cys-85, and Cys-80–Cys-95.

The protein belongs to the hainantoxin family. 17 subfamily. In terms of tissue distribution, expressed by the venom gland.

The protein localises to the secreted. In terms of biological role, putative ion channel inhibitor. The protein is Hainantoxin-XVII of Cyriopagopus hainanus (Chinese bird spider).